A 119-amino-acid chain; its full sequence is Large ribosomal subunit protein bL20 (119 aa).

The protein belongs to the bacterial ribosomal protein bL20 family.

Its function is as follows. Binds directly to 23S ribosomal RNA and is necessary for the in vitro assembly process of the 50S ribosomal subunit. It is not involved in the protein synthesizing functions of that subunit. The sequence is that of Large ribosomal subunit protein bL20 from Metamycoplasma arthritidis (strain 158L3-1) (Mycoplasma arthritidis).